The primary structure comprises 119 residues: Non-specific lipid-transfer protein 3 (119 aa).

An N-terminal signal peptide occupies residues 1–24; the sequence is MARSMKLACVVLAMCMLVAPMAEA. 4 disulfide bridges follow: cysteine 28/cysteine 77, cysteine 38/cysteine 54, cysteine 55/cysteine 100, and cysteine 75/cysteine 114.

Belongs to the plant LTP family. Expressed in roots, stem, leaves and tendrils of the mature plant.

Functionally, plant non-specific lipid-transfer proteins transfer phospholipids as well as galactolipids across membranes. May play a role in wax or cutin deposition in the cell walls of expanding epidermal cells and certain secretory tissues. This Pisum sativum (Garden pea) protein is Non-specific lipid-transfer protein 3.